Consider the following 413-residue polypeptide: PCI domain-containing protein 2 homolog (413 aa).

The PCI domain maps to 222–403; the sequence is VAYNYFLGRK…QKLVISKMNA (182 aa).

Belongs to the CSN12 family.

The chain is PCI domain-containing protein 2 homolog from Caenorhabditis elegans.